The chain runs to 619 residues: tRNA uridine 5-carboxymethylaminomethyl modification enzyme MnmG (619 aa).

FAD-binding positions include 14-19 (GAGHAG), valine 126, and serine 181. 273–287 (GPRYCPSIEDKIMRF) contacts NAD(+). Glutamine 370 lines the FAD pocket.

The protein belongs to the MnmG family. As to quaternary structure, homodimer. Heterotetramer of two MnmE and two MnmG subunits. FAD is required as a cofactor.

Its subcellular location is the cytoplasm. In terms of biological role, NAD-binding protein involved in the addition of a carboxymethylaminomethyl (cmnm) group at the wobble position (U34) of certain tRNAs, forming tRNA-cmnm(5)s(2)U34. This chain is tRNA uridine 5-carboxymethylaminomethyl modification enzyme MnmG, found in Syntrophotalea carbinolica (strain DSM 2380 / NBRC 103641 / GraBd1) (Pelobacter carbinolicus).